We begin with the raw amino-acid sequence, 442 residues long: Asparagine--tRNA ligase (442 aa).

It belongs to the class-II aminoacyl-tRNA synthetase family. Homodimer.

The protein localises to the cytoplasm. The enzyme catalyses tRNA(Asn) + L-asparagine + ATP = L-asparaginyl-tRNA(Asn) + AMP + diphosphate + H(+). The chain is Asparagine--tRNA ligase from Koribacter versatilis (strain Ellin345).